A 466-amino-acid chain; its full sequence is Ribosomal protein uS12 methylthiotransferase RimO (466 aa).

Residues 18–133 (PRIGFVSLGC…VMDAVHQHVP (116 aa)) enclose the MTTase N-terminal domain. Positions 27, 63, 92, 164, 168, and 171 each coordinate [4Fe-4S] cluster. The region spanning 150 to 391 (LTPKHYAYLK…MAVAEAVSTA (242 aa)) is the Radical SAM core domain. A TRAM domain is found at 394-466 (QRRVGSSMQV…QGHDLIGELI (73 aa)).

Belongs to the methylthiotransferase family. RimO subfamily. [4Fe-4S] cluster is required as a cofactor.

The protein resides in the cytoplasm. It carries out the reaction L-aspartate(89)-[ribosomal protein uS12]-hydrogen + (sulfur carrier)-SH + AH2 + 2 S-adenosyl-L-methionine = 3-methylsulfanyl-L-aspartate(89)-[ribosomal protein uS12]-hydrogen + (sulfur carrier)-H + 5'-deoxyadenosine + L-methionine + A + S-adenosyl-L-homocysteine + 2 H(+). Functionally, catalyzes the methylthiolation of an aspartic acid residue of ribosomal protein uS12. This chain is Ribosomal protein uS12 methylthiotransferase RimO, found in Leptothrix cholodnii (strain ATCC 51168 / LMG 8142 / SP-6) (Leptothrix discophora (strain SP-6)).